We begin with the raw amino-acid sequence, 64 residues long: Copper-specific metallothionein-2 (64 aa).

Positions 3, 5, 9, 11, 16, 18, 22, 24, 27, 33, 40, 44, 50, 52, 56, and 58 each coordinate Cu(+).

This sequence belongs to the metallothionein superfamily. Type 2 family.

In terms of biological role, the metallothioneins are involved in the cellular sequestration of toxic metal ions and regulation of essential trace elements. This isoform binds exclusively copper. The polypeptide is Copper-specific metallothionein-2 (Callinectes sapidus (Blue crab)).